The sequence spans 271 residues: Aquaporin-2 (271 aa).

Residues 1 to 11 (MWELRSIAFSR) are Cytoplasmic-facing. The helical transmembrane segment at 12–32 (AVLAEFLATLLFVFFGLGSAL) threads the bilayer. Residues 33-40 (NWPQALPS) lie on the Extracellular side of the membrane. A helical membrane pass occupies residues 41 to 59 (VLQIAMAFGLAIGTLVQAL). Residues 60-64 (GHVSG) are Cytoplasmic-facing. Residues 65-74 (AHINPAVTVA) constitute an intramembrane region (discontinuously helical). The NPA 1 motif lies at 68 to 70 (NPA). Topologically, residues 75-85 (CLVGCHVSFLR) are cytoplasmic. Residues 86 to 107 (AVFYVAAQLLGAVAGAALLHEI) traverse the membrane as a helical segment. Over 108-127 (TPPAIRGDLAVNALNNNSTA) the chain is Extracellular. Asn-123 carries N-linked (GlcNAc...) asparagine glycosylation. The chain crosses the membrane as a helical span at residues 128–148 (GQAVTVELFLTLQLVLCIFAS). Residues 149–156 (TDERRGDN) are Cytoplasmic-facing. The helical transmembrane segment at 157–176 (VGTPALSIGFSVALGHLLGI) threads the bilayer. Residues 177-180 (HYTG) are Extracellular-facing. The discontinuously helical intramembrane region spans 181-193 (CSMNPARSLAPAI). The NPA 2 signature appears at 184–186 (NPA). Residues 194–201 (VTGKFDDH) lie on the Extracellular side of the membrane. Residues 202 to 222 (WVFWIGPLVGAIVASLLYNYV) traverse the membrane as a helical segment. Residues 223–271 (LFPPAKSLSERLAVLKGLEPDTDWEEREVRRRQSVELHSPQSLPRGSKA) lie on the Cytoplasmic side of the membrane. The tract at residues 251 to 271 (VRRRQSVELHSPQSLPRGSKA) is disordered. At Ser-256 the chain carries Phosphoserine. Residues 261–271 (SPQSLPRGSKA) are compositionally biased toward polar residues.

Belongs to the MIP/aquaporin (TC 1.A.8) family. In terms of assembly, homotetramer. In terms of processing, ser-256 phosphorylation is necessary and sufficient for expression at the apical membrane. Endocytosis is not phosphorylation-dependent. Post-translationally, N-glycosylated.

It is found in the apical cell membrane. The protein localises to the basolateral cell membrane. It localises to the cell membrane. The protein resides in the cytoplasmic vesicle membrane. Its subcellular location is the golgi apparatus. It is found in the trans-Golgi network membrane. The enzyme catalyses H2O(in) = H2O(out). It carries out the reaction glycerol(in) = glycerol(out). Its function is as follows. Forms a water-specific channel that provides the plasma membranes of renal collecting duct with high permeability to water, thereby permitting water to move in the direction of an osmotic gradient. Could also be permeable to glycerol. The polypeptide is Aquaporin-2 (Bos taurus (Bovine)).